Reading from the N-terminus, the 224-residue chain is Glycerol-3-phosphate acyltransferase (224 aa).

The next 6 helical transmembrane spans lie at 4–24 (FVIV…GSIN), 60–80 (LVIF…VYFV), 88–108 (SVVV…FPIW), 124–144 (IISV…LIII), 149–169 (IVSF…FIPW), and 182–202 (WPWW…IWSH).

This sequence belongs to the PlsY family. Probably interacts with PlsX.

Its subcellular location is the cell membrane. The catalysed reaction is an acyl phosphate + sn-glycerol 3-phosphate = a 1-acyl-sn-glycero-3-phosphate + phosphate. The protein operates within lipid metabolism; phospholipid metabolism. Catalyzes the transfer of an acyl group from acyl-phosphate (acyl-PO(4)) to glycerol-3-phosphate (G3P) to form lysophosphatidic acid (LPA). This enzyme utilizes acyl-phosphate as fatty acyl donor, but not acyl-CoA or acyl-ACP. This is Glycerol-3-phosphate acyltransferase from Mycoplasmopsis pulmonis (strain UAB CTIP) (Mycoplasma pulmonis).